A 346-amino-acid chain; its full sequence is MQIRLNLEQKKYGYNVYINELERIEIKGKTAIVTNPKIAGLHLNTLLNSLKCDEYFIISVPDGEEYKNLATIELILEQLFTSKLDRSSTLIAFGGGVISDMTGFAASIYERGINFINIPTTLLAQVDASVGGKTGVNNKFGKNMIGSFYQPKAVYCESKFLRTLAFREFNAGLAEAVKMAVTFDKEMFEWLENVTLDEEQNLAKLVERSVLIKARVVEADEKERGLRALLNYGHTFAHVIENETGYKKYLHGEAVAIGMNMANSLSVKLGLMSEKDALRIKELLAKFSLPTHYVLRDESAFYEAFMLDKKTQEGSVKFILSNGIGSAVMKNDIKRDDVIKILREFK.

Residues Asp62–Lys67, Gly96–Asp100, Thr120–Thr121, Lys133, Lys142, and Phe160–Thr163 contribute to the NAD(+) site. Residues Glu175, His234, and His251 each contribute to the Zn(2+) site.

It belongs to the sugar phosphate cyclases superfamily. Dehydroquinate synthase family. The cofactor is Co(2+). Zn(2+) serves as cofactor. NAD(+) is required as a cofactor.

The protein resides in the cytoplasm. The enzyme catalyses 7-phospho-2-dehydro-3-deoxy-D-arabino-heptonate = 3-dehydroquinate + phosphate. It participates in metabolic intermediate biosynthesis; chorismate biosynthesis; chorismate from D-erythrose 4-phosphate and phosphoenolpyruvate: step 2/7. Catalyzes the conversion of 3-deoxy-D-arabino-heptulosonate 7-phosphate (DAHP) to dehydroquinate (DHQ). In Campylobacter curvus (strain 525.92), this protein is 3-dehydroquinate synthase.